The sequence spans 484 residues: ATP-dependent rRNA helicase RRP3 (484 aa).

2 stretches are compositionally biased toward low complexity: residues 1 to 14 and 22 to 34; these read MPSP…SMSQ and PSPA…APEA. A disordered region spans residues 1-38; that stretch reads MPSPSPEASSSMSQPGPPSRSPSPASSNPDAPEASHNK. A Q motif motif is present at residues 38–66; the sequence is KTFADLGISPELCRACASMGFKKPSDIQA. The Helicase ATP-binding domain occupies 69–240; sequence IPHALEGKDI…RASLNKPVRV (172 aa). 82–89 is an ATP binding site; that stretch reads AQTGSGKT. A DEAD box motif is present at residues 188 to 191; it reads DEAD. The Helicase C-terminal domain occupies 263–411; it reads NKDAYLLYLA…SFDVDKEAVA (149 aa). A disordered region spans residues 425–484; that stretch reads ALEMRESGTGGGGGKRGRDKGKRKTFGDGDDRDRDDDVVEAGVPRKKNKFTPGGKKKARK. 2 stretches are compositionally biased toward basic residues: residues 439–448 and 468–484; these read KRGRDKGKRK and PRKK…KARK.

Belongs to the DEAD box helicase family. DDX47/RRP3 subfamily. In terms of assembly, interacts with the SSU processome.

The protein localises to the nucleus. It catalyses the reaction ATP + H2O = ADP + phosphate + H(+). ATP-dependent rRNA helicase required for pre-ribosomal RNA processing. Involved in the maturation of the 35S-pre-rRNA and to its cleavage to mature 18S rRNA. This Cryptococcus neoformans var. neoformans serotype D (strain B-3501A) (Filobasidiella neoformans) protein is ATP-dependent rRNA helicase RRP3.